Here is a 153-residue protein sequence, read N- to C-terminus: Ribosome maturation factor RimP (153 aa).

Belongs to the RimP family.

It is found in the cytoplasm. Its function is as follows. Required for maturation of 30S ribosomal subunits. This Solibacter usitatus (strain Ellin6076) protein is Ribosome maturation factor RimP.